The chain runs to 250 residues: 3-deoxy-manno-octulosonate cytidylyltransferase (250 aa).

This sequence belongs to the KdsB family.

Its subcellular location is the cytoplasm. The catalysed reaction is 3-deoxy-alpha-D-manno-oct-2-ulosonate + CTP = CMP-3-deoxy-beta-D-manno-octulosonate + diphosphate. It participates in nucleotide-sugar biosynthesis; CMP-3-deoxy-D-manno-octulosonate biosynthesis; CMP-3-deoxy-D-manno-octulosonate from 3-deoxy-D-manno-octulosonate and CTP: step 1/1. The protein operates within bacterial outer membrane biogenesis; lipopolysaccharide biosynthesis. Its function is as follows. Activates KDO (a required 8-carbon sugar) for incorporation into bacterial lipopolysaccharide in Gram-negative bacteria. This is 3-deoxy-manno-octulosonate cytidylyltransferase from Geobacter sulfurreducens (strain ATCC 51573 / DSM 12127 / PCA).